A 331-amino-acid polypeptide reads, in one-letter code: Ketol-acid reductoisomerase (NADP(+)) (331 aa).

The 181-residue stretch at 2–182 (AKMYYDKDAD…GGTRAGVIET (181 aa)) folds into the KARI N-terminal Rossmann domain. Residues 25 to 28 (FGSQ), serine 51, serine 53, and 83 to 86 (DEKQ) contribute to the NADP(+) site. Residue histidine 108 is part of the active site. Glycine 134 contacts NADP(+). In terms of domain architecture, KARI C-terminal knotted spans 183 to 328 (TFKEETETDL…KGLREMMAWI (146 aa)). Mg(2+) contacts are provided by aspartate 191, glutamate 195, glutamate 227, and glutamate 231. Serine 252 serves as a coordination point for substrate.

It belongs to the ketol-acid reductoisomerase family. Requires Mg(2+) as cofactor.

It carries out the reaction (2R)-2,3-dihydroxy-3-methylbutanoate + NADP(+) = (2S)-2-acetolactate + NADPH + H(+). It catalyses the reaction (2R,3R)-2,3-dihydroxy-3-methylpentanoate + NADP(+) = (S)-2-ethyl-2-hydroxy-3-oxobutanoate + NADPH + H(+). The protein operates within amino-acid biosynthesis; L-isoleucine biosynthesis; L-isoleucine from 2-oxobutanoate: step 2/4. Its pathway is amino-acid biosynthesis; L-valine biosynthesis; L-valine from pyruvate: step 2/4. Its function is as follows. Involved in the biosynthesis of branched-chain amino acids (BCAA). Catalyzes an alkyl-migration followed by a ketol-acid reduction of (S)-2-acetolactate (S2AL) to yield (R)-2,3-dihydroxy-isovalerate. In the isomerase reaction, S2AL is rearranged via a Mg-dependent methyl migration to produce 3-hydroxy-3-methyl-2-ketobutyrate (HMKB). In the reductase reaction, this 2-ketoacid undergoes a metal-dependent reduction by NADPH to yield (R)-2,3-dihydroxy-isovalerate. The protein is Ketol-acid reductoisomerase (NADP(+)) of Thermoanaerobacter pseudethanolicus (strain ATCC 33223 / 39E) (Clostridium thermohydrosulfuricum).